The primary structure comprises 297 residues: MKNILQGAMTALITPFKNGKLDEETFEKLIKRQIKNGIDVVVPVGTTGESATLTHNEHKICIEIAVNACKDTNVKVLAGAGSNATHEAIDFAKFAQSHGADGILSVAPYYNKPTQEGLYQHYKAIAESIDIPVLLYNVPGRVGVDILPSTVFRLFKECKNIFGIKEATGSIDRCVDLLAHEPNLVVISGEDAINYPILSNGGKGVISVTANLLPDYICELTHLALDEEYTKAKAINDKLYNINKILFCESNPIPIKAAMYIAGLIGNLEYRLPLCEPSSENFKKIEQTMKNYEIKGF.

T47 contacts pyruvate. Residue Y136 is the Proton donor/acceptor of the active site. The active-site Schiff-base intermediate with substrate is the K165. I206 is a binding site for pyruvate.

The protein belongs to the DapA family. As to quaternary structure, homotetramer; dimer of dimers.

It is found in the cytoplasm. The catalysed reaction is L-aspartate 4-semialdehyde + pyruvate = (2S,4S)-4-hydroxy-2,3,4,5-tetrahydrodipicolinate + H2O + H(+). Its pathway is amino-acid biosynthesis; L-lysine biosynthesis via DAP pathway; (S)-tetrahydrodipicolinate from L-aspartate: step 3/4. Catalyzes the condensation of (S)-aspartate-beta-semialdehyde [(S)-ASA] and pyruvate to 4-hydroxy-tetrahydrodipicolinate (HTPA). This Campylobacter curvus (strain 525.92) protein is 4-hydroxy-tetrahydrodipicolinate synthase.